The chain runs to 966 residues: Protein STICHEL-like 4 (966 aa).

2 disordered regions span residues 64 to 118 (RSLR…DRSS) and 200 to 237 (RDNA…REQN). Over residues 75 to 84 (LKEDHQDSRE) the composition is skewed to basic and acidic residues. The span at 98 to 108 (PIVSFGTSKVT) shows a compositional bias: polar residues. A compositionally biased stretch (basic and acidic residues) spans 109–118 (PSDEKFDRSS). Over residues 208 to 217 (SEMSIASNSV) the composition is skewed to polar residues. Residues 219 to 236 (RGEKYEGEEGGGGRDREQ) show a composition bias toward basic and acidic residues. An ATP-binding site is contributed by 384 to 391 (GPNGTGKT). Residues C403, C412, C415, and C418 each coordinate Zn(2+). Residues 650-678 (SKEDMEKLKQALKTLSESEKQLRVSNDKL) are a coiled coil. Residues 706–717 (FNHTPLTDSDPS) are compositionally biased toward polar residues. The disordered stretch occupies residues 706–733 (FNHTPLTDSDPSNHVVAGTRRDDSKQGF).

This sequence belongs to the DnaX/STICHEL family.

The polypeptide is Protein STICHEL-like 4 (Arabidopsis thaliana (Mouse-ear cress)).